Reading from the N-terminus, the 1522-residue chain is Lysophospholipase NTE1 (1522 aa).

The Lumenal segment spans residues 1–73; sequence MVDGTYVNSS…SLLVYLINGT (73 aa). A helical transmembrane segment spans residues 74–94; the sequence is VPFYLVVLGSVFTPIIVYLIL. The Cytoplasmic segment spans residues 95 to 1522; it reads RSRVLSAYSR…IHLLHRRNSI (1428 aa). Disordered regions lie at residues 443 to 468, 485 to 523, and 535 to 556; these read SVQE…TPNK, DLLS…ASSP, and SQNF…PSVV. Low complexity-rich tracts occupy residues 498-511 and 540-555; these read KTAS…PRIS and PLSS…KPSV. A nucleoside 3',5'-cyclic phosphate-binding positions include 661–782 and 778–918; these read PINV…LTKL and TLTK…VAHK. 2 disordered regions span residues 828–852 and 1125–1145; these read QKSK…DNQP and SSQN…GAPP. The PNPLA domain occupies 1219 to 1383; it reads LVLGGGGARG…LDNLPVLEMK (165 aa). A GXGXXG motif is present at residues 1223-1228; the sequence is GGGARG. Positions 1250–1254 match the GXSXG motif; it reads GTSIG. Serine 1252 acts as the Nucleophile in catalysis. Residue aspartate 1370 is the Proton acceptor of the active site. A DGA/G motif is present at residues 1370-1372; that stretch reads DGG.

Belongs to the NTE family.

The protein resides in the endoplasmic reticulum membrane. It catalyses the reaction a 1-acyl-sn-glycero-3-phosphocholine + H2O = sn-glycerol 3-phosphocholine + a fatty acid + H(+). Its activity is regulated as follows. Inhibited by organophosphorus esters. In terms of biological role, intracellular phospholipase B that catalyzes the double deacylation of phosphatidylcholine (PC) to glycerophosphocholine (GroPCho). Plays an important role in membrane lipid homeostasis. Responsible for the rapid PC turnover in response to inositol, elevated temperatures, or when choline is present in the growth medium. This chain is Lysophospholipase NTE1 (NTE1), found in Eremothecium gossypii (strain ATCC 10895 / CBS 109.51 / FGSC 9923 / NRRL Y-1056) (Yeast).